An 814-amino-acid polypeptide reads, in one-letter code: Phenylalanine--tRNA ligase beta subunit (814 aa).

Residues 39 to 153 (SKNVNGVVLG…LKHELGTPVS (115 aa)) form the tRNA-binding domain. In terms of domain architecture, B5 spans 414-500 (NEDIFIKLRR…RLIGYDRFDL (87 aa)). Aspartate 478, aspartate 484, glutamate 487, and glutamate 488 together coordinate Mg(2+). One can recognise an FDX-ACB domain in the interval 720 to 813 (PIVPKIERDI…IEKSFQTKLR (94 aa)).

It belongs to the phenylalanyl-tRNA synthetase beta subunit family. Type 1 subfamily. In terms of assembly, tetramer of two alpha and two beta subunits. The cofactor is Mg(2+).

It localises to the cytoplasm. The catalysed reaction is tRNA(Phe) + L-phenylalanine + ATP = L-phenylalanyl-tRNA(Phe) + AMP + diphosphate + H(+). The polypeptide is Phenylalanine--tRNA ligase beta subunit (Prochlorococcus marinus (strain MIT 9312)).